The following is a 739-amino-acid chain: DEAD-box ATP-dependent RNA helicase 32 (739 aa).

Positions 71–99 (RKFAQLPISDKTKRGLKDAKYVDMTDVQS) match the Q motif motif. The Helicase ATP-binding domain maps to 102–277 (IPHALCGRDI…RLSLRDPEYI (176 aa)). Residue 115–122 (ARTGSGKT) coordinates ATP. The DEAD box signature appears at 225–228 (DEAD). A Helicase C-terminal domain is found at 303-461 (KLDMLWSFIK…EVSRLLAALL (159 aa)). Residues 643–689 (GAEMRKADIEDKKVDKERRREKRMKQKIKRKRGAMEDEEEEEEEDHD) adopt a coiled-coil conformation. The disordered stretch occupies residues 656-725 (VDKERRREKR…GGKINTDSLS (70 aa)). Residues 661–674 (RREKRMKQKIKRKR) show a composition bias toward basic residues. Over residues 678 to 688 (EDEEEEEEEDH) the composition is skewed to acidic residues.

The protein belongs to the DEAD box helicase family. DDX10/DBP4 subfamily.

The catalysed reaction is ATP + H2O = ADP + phosphate + H(+). This Arabidopsis thaliana (Mouse-ear cress) protein is DEAD-box ATP-dependent RNA helicase 32 (RH32).